A 156-amino-acid polypeptide reads, in one-letter code: Small ribosomal subunit protein uS7 (156 aa).

This sequence belongs to the universal ribosomal protein uS7 family. Part of the 30S ribosomal subunit. Contacts proteins S9 and S11.

In terms of biological role, one of the primary rRNA binding proteins, it binds directly to 16S rRNA where it nucleates assembly of the head domain of the 30S subunit. Is located at the subunit interface close to the decoding center, probably blocks exit of the E-site tRNA. This is Small ribosomal subunit protein uS7 from Limosilactobacillus fermentum (strain NBRC 3956 / LMG 18251) (Lactobacillus fermentum).